The following is a 474-amino-acid chain: Chromosomal replication initiator protein DnaA (474 aa).

Positions 1-90 (MSSSLWLQCL…RQVVVPSSQI (90 aa)) are domain I, interacts with DnaA modulators. Positions 91–137 (IAPAAPAVTLAPRPLPATRILQDDAPSRSWEPAPSPVQPESKSGYRS) are domain II. The disordered stretch occupies residues 112 to 137 (QDDAPSRSWEPAPSPVQPESKSGYRS). Positions 128-137 (QPESKSGYRS) are enriched in polar residues. The interval 138-354 (NVNPKHNFNN…GALNRVIANA (217 aa)) is domain III, AAA+ region. The ATP site is built by G182, G184, K185, and T186. The interval 355–474 (NFTGRAITID…YSNLIRTLST (120 aa)) is domain IV, binds dsDNA.

The protein belongs to the DnaA family. Oligomerizes as a right-handed, spiral filament on DNA at oriC.

Its subcellular location is the cytoplasm. In terms of biological role, plays an essential role in the initiation and regulation of chromosomal replication. ATP-DnaA binds to the origin of replication (oriC) to initiate formation of the DNA replication initiation complex once per cell cycle. Binds the DnaA box (a 9 base pair repeat at the origin) and separates the double-stranded (ds)DNA. Forms a right-handed helical filament on oriC DNA; dsDNA binds to the exterior of the filament while single-stranded (ss)DNA is stabiized in the filament's interior. The ATP-DnaA-oriC complex binds and stabilizes one strand of the AT-rich DNA unwinding element (DUE), permitting loading of DNA polymerase. After initiation quickly degrades to an ADP-DnaA complex that is not apt for DNA replication. Binds acidic phospholipids. This is Chromosomal replication initiator protein DnaA from Photobacterium profundum (strain SS9).